The chain runs to 641 residues: Probable potassium transport system protein Kup (641 aa).

12 helical membrane-spanning segments follow: residues isoleucine 29–isoleucine 49, isoleucine 66–leucine 86, tryptophan 119–threonine 139, proline 156–phenylalanine 176, glycine 185–isoleucine 205, leucine 231–tyrosine 251, tryptophan 266–leucine 286, alanine 298–isoleucine 318, isoleucine 356–phenylalanine 376, alanine 384–valine 404, valine 415–methionine 435, and leucine 438–threonine 458.

Belongs to the HAK/KUP transporter (TC 2.A.72) family.

The protein localises to the cell inner membrane. It catalyses the reaction K(+)(in) + H(+)(in) = K(+)(out) + H(+)(out). Its function is as follows. Transport of potassium into the cell. Likely operates as a K(+):H(+) symporter. The polypeptide is Probable potassium transport system protein Kup (Chlorobium phaeovibrioides (strain DSM 265 / 1930) (Prosthecochloris vibrioformis (strain DSM 265))).